Reading from the N-terminus, the 178-residue chain is Protamine-like protein (178 aa).

Disordered regions lie at residues 1-27 (PSTTSSKSPKRRAKSPRRKRTGPTVSD) and 77-178 (SVVK…RAKK). Basic residues-rich tracts occupy residues 8 to 21 (SPKRRAKSPRRKRT) and 94 to 178 (PRRR…RAKK). One can recognise an H15 domain in the interval 21–89 (TGPTVSDLIL…KAKGFYKLNK (69 aa)).

Male germ cells.

It is found in the nucleus. The protein localises to the chromosome. Replaces histones in the chromatin of sperm during the haploid phase of spermatogenesis. Compacts sperm DNA into a highly condensed, stable and inactive complex. The sequence is that of Protamine-like protein from Mullus surmuletus (Striped red mullet).